The following is a 341-amino-acid chain: Phosphoribosylformylglycinamidine cyclo-ligase (341 aa).

The protein belongs to the AIR synthase family.

It localises to the cytoplasm. The catalysed reaction is 2-formamido-N(1)-(5-O-phospho-beta-D-ribosyl)acetamidine + ATP = 5-amino-1-(5-phospho-beta-D-ribosyl)imidazole + ADP + phosphate + H(+). Its pathway is purine metabolism; IMP biosynthesis via de novo pathway; 5-amino-1-(5-phospho-D-ribosyl)imidazole from N(2)-formyl-N(1)-(5-phospho-D-ribosyl)glycinamide: step 2/2. The sequence is that of Phosphoribosylformylglycinamidine cyclo-ligase from Xanthomonas euvesicatoria pv. vesicatoria (strain 85-10) (Xanthomonas campestris pv. vesicatoria).